The primary structure comprises 286 residues: Spermidine/putrescine transport system permease protein PotB (286 aa).

Over 1-13 the chain is Cytoplasmic; it reads MKIINNKFQKITV. A helical membrane pass occupies residues 14–33; that stretch reads AIIFSWLIFFVLIPNLLVLA. Topologically, residues 34-71 are periplasmic; that stretch reads VSFLTRDGSNFYAFPITIENYTNLFNPLYAQVVWNSLS. An ABC transmembrane type-1 domain is found at 66–274; sequence VWNSLSMSGI…MALLIFVYYR (209 aa). Residues 72-91 form a helical membrane-spanning segment; that stretch reads MSGIATIICLLIGYPFAFMM. The Cytoplasmic segment spans residues 92-100; that stretch reads SKIHPKYRP. Residues 101–120 traverse the membrane as a helical segment; the sequence is LLLFLVVLPFWTNSLIRIYG. At 121–151 the chain is on the periplasmic side; sequence MKVFLGVKGILNTMLIDMGILSAPIRILNTE. Residues 152 to 171 traverse the membrane as a helical segment; that stretch reads IAVIIGLVYLLLPFMILPLY. Residues 172-199 are Cytoplasmic-facing; the sequence is SAIEKLDNRLLEAARDLGANTFQRFFRV. Residues 200-219 form a helical membrane-spanning segment; that stretch reads ILPLTMPGIIAGCLLVLLPA. At 220 to 252 the chain is on the periplasmic side; that stretch reads MGMFYVADLLGGAKVLLVGNVIKSEFLISRNWP. Residues 253–272 traverse the membrane as a helical segment; sequence FGSAVSIGLTVLMALLIFVY. Over 273–286 the chain is Cytoplasmic; that stretch reads YRANKLLNRKVELE.

Belongs to the binding-protein-dependent transport system permease family. CysTW subfamily.

It localises to the cell inner membrane. Required for the activity of the bacterial periplasmic transport system of putrescine and spermidine. The chain is Spermidine/putrescine transport system permease protein PotB (potB) from Haemophilus influenzae (strain ATCC 51907 / DSM 11121 / KW20 / Rd).